We begin with the raw amino-acid sequence, 273 residues long: Glutamate racemase (273 aa).

Residues D9 to S10 and Y41 to G42 each bind substrate. C73 serves as the catalytic Proton donor/acceptor. Substrate is bound at residue N74–T75. Residue C183 is the Proton donor/acceptor of the active site. A substrate-binding site is contributed by T184–H185.

Belongs to the aspartate/glutamate racemases family.

It carries out the reaction L-glutamate = D-glutamate. The protein operates within cell wall biogenesis; peptidoglycan biosynthesis. Provides the (R)-glutamate required for cell wall biosynthesis. The chain is Glutamate racemase from Shewanella sp. (strain ANA-3).